Here is a 146-residue protein sequence, read N- to C-terminus: Large ribosomal subunit protein uL15 (146 aa).

Positions 1 to 57 (MKLHELKPAQGSRKTRNRVGRGSSSGNGKTAGRGQKGQKARSGGNIRSGFEGGQTPL) are disordered. The segment covering 23–35 (SSSGNGKTAGRGQ) has biased composition (gly residues).

The protein belongs to the universal ribosomal protein uL15 family. In terms of assembly, part of the 50S ribosomal subunit.

Binds to the 23S rRNA. In Streptococcus mutans serotype c (strain ATCC 700610 / UA159), this protein is Large ribosomal subunit protein uL15.